The primary structure comprises 324 residues: DGAT1/2-independent enzyme synthesizing storage lipids (324 aa).

Over 1–50 the chain is Lumenal; it reads MIDKNQTCGVGQDSVPYMICLIHILEEWFGVEQLEDYLNFANYLLWVFTP. A glycan (N-linked (GlcNAc...) asparagine) is linked at Asn5. Residues 51-71 form a helical membrane-spanning segment; the sequence is LILLILPYFTIFLLYLTIIFL. Residues 72–125 are Cytoplasmic-facing; that stretch reads HIYKRKNVLKEAYSHNLWDGARKTVATLWDGHAAVWHGYEVHGMEKIPEDGPAL. A helical membrane pass occupies residues 126 to 146; it reads IIFYHGAIPIDFYYFMAKIFI. The active site involves His130. The Lumenal segment spans residues 147–324; that stretch reads HKGRTCRVVA…IMSALLERFH (178 aa).

Belongs to the diacylglycerol acyltransferase family. Highly divergent.

It localises to the endoplasmic reticulum membrane. It catalyses the reaction a 1,2-diacylglycerol + a 1,2-diacyl-sn-glycero-3-phosphocholine = a triacylglycerol + a 1-acyl-sn-glycero-3-phosphocholine. The enzyme catalyses a 1-O-alkyl-2-acyl-sn-glycero-3-phosphocholine + a 1,2-diacylglycerol = a 1-O-alkyl-sn-glycero-3-phosphocholine + a triacylglycerol. It carries out the reaction a 2-acylglycerol + an acyl-CoA = a 1,2-diacylglycerol + CoA. The catalysed reaction is an acyl-CoA + a 1,2-diacyl-sn-glycerol = a triacyl-sn-glycerol + CoA. It catalyses the reaction 2-(9Z-octadecenoyl)-glycerol + (9Z)-octadecenoyl-CoA = 1,2-di-(9Z-octadecenoyl)-glycerol + CoA. The enzyme catalyses 1,2-di-(9Z-octadecenoyl)-sn-glycerol + (9Z)-octadecenoyl-CoA = 1,2,3-tri-(9Z-octadecenoyl)-glycerol + CoA. Acyltransferase activity is specifically inhibited by TMX1 at the endoplasmic reticulum, restricting accumulation of triacylglycerol. Catalytic subunit of the alternative triglyceride biosynthesis pathway, which mediates formation of triacylglycerol from diacylglycerol and membrane phospholipids. Synthesizes triacylglycerol at the expense of membrane phospholipids, such as phosphatidylcholine (PC) and its ether-linked form (ePC), thereby altering the composition of membranes. The alternative triglyceride biosynthesis pathway is probably required to provide the energy required for rapid growth when fuel sources are limiting. It maintains mitochondrial function during periods of extracellular lipid starvation. Can also use acyl-CoA as donor: acts as a acyl-CoA:monoacylglycerol acyltransferase (MGAT), but also shows acyl-CoA:diacylglycerol acyltransferase (DGAT) activity. The sequence is that of DGAT1/2-independent enzyme synthesizing storage lipids from Homo sapiens (Human).